The following is a 651-amino-acid chain: Intraflagellar transport protein 70A (651 aa).

7 TPR repeats span residues 8–41 (DGEY…QYRS), 42–75 (RAGL…SPEV), 140–173 (PESE…MGYK), 175–207 (DLSF…GIRE), 372–405 (LTEQ…YDET), 410–443 (IPVL…CNEH), and 445–478 (IWKL…HYDN). A coiled-coil region spans residues 494 to 521 (YIMTSQNEEAEELMRKIEKEEEQIAYEN). One copy of the TPR 8 repeat lies at 530–563 (CIVNLVIGTLYCAKGNYEFGISRVIKSLEPYNKK).

This sequence belongs to the TTC30/dfy-1/fleer family.

The protein localises to the cell projection. The protein resides in the cilium. Required for polyglutamylation of axonemal tubulin. Plays a role in anterograde intraflagellar transport (IFT), the process by which cilia precursors are transported from the base of the cilium to the site of their incorporation at the tip. In Xenopus laevis (African clawed frog), this protein is Intraflagellar transport protein 70A (ift70a).